Reading from the N-terminus, the 299-residue chain is Light-independent protochlorophyllide reductase iron-sulfur ATP-binding protein (299 aa).

The disordered stretch occupies residues 1 to 23; the sequence is MSPLDRTPPSLRGQDGEGSVQVH. ATP is bound by residues 43–48 and Lys-72; that span reads GIGKST. Ser-47 lines the Mg(2+) pocket. [4Fe-4S] cluster contacts are provided by Cys-128 and Cys-162. Residues 213–214 and 237–239 each bind ATP; these read NR and PDL.

Belongs to the NifH/BchL/ChlL family. As to quaternary structure, homodimer. Protochlorophyllide reductase is composed of three subunits; BchL, BchN and BchB. Requires [4Fe-4S] cluster as cofactor.

The catalysed reaction is chlorophyllide a + oxidized 2[4Fe-4S]-[ferredoxin] + 2 ADP + 2 phosphate = protochlorophyllide a + reduced 2[4Fe-4S]-[ferredoxin] + 2 ATP + 2 H2O. Its pathway is porphyrin-containing compound metabolism; bacteriochlorophyll biosynthesis (light-independent). Functionally, component of the dark-operative protochlorophyllide reductase (DPOR) that uses Mg-ATP and reduced ferredoxin to reduce ring D of protochlorophyllide (Pchlide) to form chlorophyllide a (Chlide). This reaction is light-independent. The L component serves as a unique electron donor to the NB-component of the complex, and binds Mg-ATP. This Roseobacter denitrificans (strain ATCC 33942 / OCh 114) (Erythrobacter sp. (strain OCh 114)) protein is Light-independent protochlorophyllide reductase iron-sulfur ATP-binding protein.